The primary structure comprises 95 residues: Co-chaperonin GroES (95 aa).

It belongs to the GroES chaperonin family. In terms of assembly, heptamer of 7 subunits arranged in a ring. Interacts with the chaperonin GroEL.

The protein localises to the cytoplasm. Its function is as follows. Together with the chaperonin GroEL, plays an essential role in assisting protein folding. The GroEL-GroES system forms a nano-cage that allows encapsulation of the non-native substrate proteins and provides a physical environment optimized to promote and accelerate protein folding. GroES binds to the apical surface of the GroEL ring, thereby capping the opening of the GroEL channel. The protein is Co-chaperonin GroES of Bordetella petrii (strain ATCC BAA-461 / DSM 12804 / CCUG 43448).